Reading from the N-terminus, the 379-residue chain is Homoserine O-acetyltransferase (379 aa).

An AB hydrolase-1 domain is found at 52 to 356 (NVVVVLHALT…VYGHDGFLVE (305 aa)). Catalysis depends on serine 157, which acts as the Nucleophile. Position 227 (arginine 227) interacts with substrate. Residues aspartate 320 and histidine 350 contribute to the active site. Position 351 (aspartate 351) interacts with substrate.

This sequence belongs to the AB hydrolase superfamily. MetX family. As to quaternary structure, homodimer.

The protein localises to the cytoplasm. It carries out the reaction L-homoserine + acetyl-CoA = O-acetyl-L-homoserine + CoA. The protein operates within amino-acid biosynthesis; L-methionine biosynthesis via de novo pathway; O-acetyl-L-homoserine from L-homoserine: step 1/1. Transfers an acetyl group from acetyl-CoA to L-homoserine, forming acetyl-L-homoserine. The polypeptide is Homoserine O-acetyltransferase (Mycobacterium bovis (strain ATCC BAA-935 / AF2122/97)).